A 206-amino-acid chain; its full sequence is Protein 6b (206 aa).

The disordered stretch occupies residues 162-182 (YTEQAEEEEEEEEEEEEEEVL). Positions 165 to 182 (QAEEEEEEEEEEEEEEVL) are enriched in acidic residues.

Its function is as follows. Involved in tumor formation and increases auxin and cytokinin effects in host plants. This chain is Protein 6b (6b), found in Allorhizobium ampelinum (strain ATCC BAA-846 / DSM 112012 / S4) (Agrobacterium vitis (strain S4)).